We begin with the raw amino-acid sequence, 375 residues long: POU domain, class 3, transcription factor 1 (375 aa).

3 disordered regions span residues 1 to 29 (MAAT…RMHQ), 56 to 139 (MSLT…QPLI), and 151 to 200 (MLGP…PSSD). Composition is skewed to polar residues over residues 107-117 (VHQQTPSSHAW), 130-139 (PGSNSHQPLI), and 151-160 (MLGPQASSLH). Basic and acidic residues predominate over residues 162–171 (SMRDPLHDDP). The region spanning 194-268 (EDAPSSDDLE…LLNKWLEETD (75 aa)) is the POU-specific domain. The segment at residues 286 to 345 (KRKKRTSIEVGVKGALENHFLKCPKPSAHEITSLADSLQLEKEVVRVWFCNRRQKEKRMT) is a DNA-binding region (homeobox).

It belongs to the POU transcription factor family. Class-3 subfamily.

The protein resides in the nucleus. Acts as a transcription factor. May play a role in neuronal differentiation. This is POU domain, class 3, transcription factor 1 from Xenopus tropicalis (Western clawed frog).